Consider the following 348-residue polypeptide: Isopentenyl-diphosphate delta-isomerase (348 aa).

9–10 contributes to the substrate binding site; the sequence is RK. Residues 68–70, serine 98, and asparagine 127 each bind FMN; that span reads AMT. Glutamine 157 is a binding site for substrate. Glutamate 158 serves as a coordination point for Mg(2+). FMN is bound by residues lysine 188, serine 213, threonine 218, and 286–287; that span reads AG.

The protein belongs to the IPP isomerase type 2 family. In terms of assembly, homooctamer. Dimer of tetramers. FMN is required as a cofactor. Requires NADPH as cofactor. Mg(2+) serves as cofactor.

It localises to the cytoplasm. The enzyme catalyses isopentenyl diphosphate = dimethylallyl diphosphate. In terms of biological role, involved in the biosynthesis of isoprenoids. Catalyzes the 1,3-allylic rearrangement of the homoallylic substrate isopentenyl (IPP) to its allylic isomer, dimethylallyl diphosphate (DMAPP). The polypeptide is Isopentenyl-diphosphate delta-isomerase (Limosilactobacillus reuteri (strain DSM 20016) (Lactobacillus reuteri)).